Consider the following 1438-residue polypeptide: MRDEATRKKRSFSDGHFFKKLKLMSRKKQPVMERSKTTRTRKESTNSAAKSSLSLRRANNGRKTIAKRRVLTDIGSTNEGVAGNSGSNSPAQYSHTPHFSDSIPPLPLELPDIVSIRSSRSHISNKSNKNKHGIDLTFIPRRSLQNSKAGLKKPNTSPQGYFNIPVTIDRASEKVKHTDTKNTFNSSSSENERPVLSILQKDDSQSSSHPAIDSMSAPNNINNNNDIENSSNSLFDTILSIAHSAISHVPKISALNTEIQREFSHSGESHTGSTRHPYFHIHHAQQQHPLSQQQGPLPVSENANQNPNDTVLIHSPSANTAHRSSSFLRHLDYLLSPTSGPASDKHTQVEEGDDEEELSPLSKAFLSPSTQLVPTNTSTTPLSGSLTPNNRNVNANSNSETENDNDRDDRSNVGKVKFQPLKVHEPAISTFGKGNLTLEAVAGSSDIDNTTIDLDENNTNNNPNASSTNLSHISKSNVNNNLGPKELNTSYRNSTYIDMARFENSQSNLSSHRARSKTLPANKALENAVGDEGNSKRNSRYSSYSNDMAFDDADERKFRSMSKKFLNRRSFSPSNLGNKVIPGINLRNSFNKNRNSSSDFFSTNQGQQMPRTSTAGSGNIHAIMGLDSGNDDFKLEGIEYASEKKNSEFHTLFKDCDINPNEKLIVDHSCALSRDILLQGRMYISDAHIGFFSNILGWVSTVFIPFKEIVQIEKKTTAGIFPNGIVIDTLHTKYIFASFMSRDATFDLITDVWNQIILGKKYRNGFGNNDDGTISDSSSAFFDDSDDNDDDGDLDDDDPDINSTDMTSSDDIDADVFNESNDLGKNQKSTNYLLGPNKHSPTTADFKPSNNDHLVIEANINAPLGKVVNLLYGEDVSYYERILKAQKNFEISPIPNNFLTKKIRDYAYTKPLSGSIGPSKTKCLITDTLEHYDLEDYVKVLSITKNPDVPSGNIFSVKTVFLFSWDKNNSTKLTVYNSVDWTGKSWIKSMIEKGTFDGVADTTKIMISEIKKILSDEDSNINSKHQASNNESEEEIINLPTIGPPVHDPTEPDFQKGKDDTVIDEKINIPVPLGTVFSLLYGDDTSYIKKIIENQNNFNVCDIPKFVNNAREITYTKKLNNSFGPKQTKCIVTETIEHMDLNSFFMVKQIVRSPDVPYGSSFSVHTRFFYSWGDHNTTNMKVVTNVVWTGKSMLKGTIEKGSIDGQRSSTKQLVDDLKKIISNASSTKKKSRRRGKTVNKRKSSPSTIKNEKNEENFEDTSTKNSFFSAFSMLQQVNITSVQGIMTIISFFICLIFFFRLLFHSKNTSNIQIITPGTILINGNEYNYVPNFKTLYHVYEDNIIKDARRKDSNKNNIVTDTEGLIWDWLIDRGNGTVQNSVLSNHIKESNNKKVKLVNGVSDHKIQQLVESIKITELQLQEMKELLAQTDNTSATNQLL.

Basic and acidic residues predominate over residues 1-17; that stretch reads MRDEATRKKRSFSDGHF. Disordered regions lie at residues 1 to 97, 174 to 194, 200 to 219, 285 to 308, 338 to 418, 455 to 485, and 505 to 543; these read MRDE…SHTP, KVKHTDTKNTFNSSSSENERP, QKDDSQSSSHPAIDSMSAPN, QQQHPLSQQQGPLPVSENANQNPN, TSGP…KVKF, DENNTNNNPNASSTNLSHISKSNVNNNLGPK, and SQSNLSSHRARSKTLPANKALENAVGDEGNSKRNSRYSS. The Cytoplasmic portion of the chain corresponds to 1 to 1277; that stretch reads MRDEATRKKR…SAFSMLQQVN (1277 aa). S13 bears the Phosphoserine mark. A compositionally biased stretch (basic residues) spans 18–29; that stretch reads FKKLKLMSRKKQ. Basic and acidic residues predominate over residues 30–44; sequence PVMERSKTTRTRKES. The segment covering 45-58 has biased composition (low complexity); the sequence is TNSAAKSSLSLRRA. Over residues 74-97 the composition is skewed to polar residues; that stretch reads IGSTNEGVAGNSGSNSPAQYSHTP. Low complexity-rich tracts occupy residues 286–298 and 374–398; these read QQHPLSQQQGPLP and PTNTSTTPLSGSLTPNNRNVNANSN. Position 411 is a phosphoserine (S411). The segment covering 455–470 has biased composition (low complexity); the sequence is DENNTNNNPNASSTNL. Positions 471-485 are enriched in polar residues; that stretch reads SHISKSNVNNNLGPK. S596 is subject to Phosphoserine. A GRAM domain is found at 648–716; the sequence is EFHTLFKDCD…KEIVQIEKKT (69 aa). The segment at 777-843 is disordered; sequence SSSAFFDDSD…LGPNKHSPTT (67 aa). The span at 783–800 shows a compositional bias: acidic residues; the sequence is DDSDDNDDDGDLDDDDPD. Over residues 818–832 the composition is skewed to polar residues; it reads NESNDLGKNQKSTNY. In terms of domain architecture, VASt 1 spans 851–1018; sequence NDHLVIEANI…EIKKILSDED (168 aa). S1032 is modified (phosphoserine). The VASt 2 domain occupies 1059 to 1225; sequence DDTVIDEKIN…DLKKIISNAS (167 aa). Residues 1225 to 1257 are disordered; sequence SSTKKKSRRRGKTVNKRKSSPSTIKNEKNEENF. Residues 1227 to 1243 are compositionally biased toward basic residues; it reads TKKKSRRRGKTVNKRKS. A helical transmembrane segment spans residues 1278 to 1298; sequence ITSVQGIMTIISFFICLIFFF. The Lumenal segment spans residues 1299–1438; sequence RLLFHSKNTS…DNTSATNQLL (140 aa). N1306, N1373, and N1430 each carry an N-linked (GlcNAc...) asparagine glycan.

Belongs to the YSP2 family.

The protein localises to the mitochondrion membrane. Its subcellular location is the endoplasmic reticulum membrane. In terms of biological role, involved in induction of programmed cell death in response to reactive oxygen species (ROS). May be involved in sterol transfer between intracellular membranes. The protein is Membrane-anchored lipid-binding protein YSP2 of Saccharomyces cerevisiae (strain ATCC 204508 / S288c) (Baker's yeast).